The following is a 251-amino-acid chain: MSLPATFDLTPEDAQLLLAANTHLGARNVQVHQEPYVFNTRPDGVNVINVGKTWEKIVLAARIIAAIPNPEDVCAISSRTYGQRAVLKFSAHTGATPIAGRFTPGSFTNYITRSFKEPRLIIVTDPRSDFQAIKEASYVNIPVIALTDLDSPSEYVDVAIPCNNRGKHSIGLVWYLLAREVLRLRGALVDRTQPWAIMPDLYFYRNPEEVEQQAVEEASATGATEEATEEATEETTEATEWAEDNTENATW.

S2 carries the N-acetylserine modification. A compositionally biased stretch (low complexity) spans 214–225 (AVEEASATGATE). The tract at residues 214–251 (AVEEASATGATEEATEEATEETTEATEWAEDNTENATW) is disordered. Positions 226 to 251 (EATEEATEETTEATEWAEDNTENATW) are enriched in acidic residues.

Belongs to the universal ribosomal protein uS2 family. Component of the small ribosomal subunit. Mature ribosomes consist of a small (40S) and a large (60S) subunit. The 40S subunit contains about 33 different proteins and 1 molecule of RNA (18S). The 60S subunit contains about 49 different proteins and 3 molecules of RNA (25S, 5.8S and 5S). Interacts with RPS21.

It localises to the cytoplasm. Its function is as follows. Required for the assembly and/or stability of the 40S ribosomal subunit. Required for the processing of the 20S rRNA-precursor to mature 18S rRNA in a late step of the maturation of 40S ribosomal subunits. This is Small ribosomal subunit protein uS2B from Vanderwaltozyma polyspora (strain ATCC 22028 / DSM 70294 / BCRC 21397 / CBS 2163 / NBRC 10782 / NRRL Y-8283 / UCD 57-17) (Kluyveromyces polysporus).